The primary structure comprises 199 residues: SCO2-like protein RC0042 (199 aa).

Belongs to the SCO1/2 family.

The chain is SCO2-like protein RC0042 from Rickettsia conorii (strain ATCC VR-613 / Malish 7).